Here is a 183-residue protein sequence, read N- to C-terminus: Large ribosomal subunit protein uL13m (183 aa).

Belongs to the universal ribosomal protein uL13 family. In terms of assembly, component of the mitochondrial large ribosomal subunit (mt-LSU). Mature N.crassa 74S mitochondrial ribosomes consist of a small (37S) and a large (54S) subunit. The 37S small subunit contains a 16S ribosomal RNA (16S mt-rRNA) and 32 different proteins. The 54S large subunit contains a 23S rRNA (23S mt-rRNA) and 42 different proteins.

It localises to the mitochondrion. Component of the mitochondrial ribosome (mitoribosome), a dedicated translation machinery responsible for the synthesis of mitochondrial genome-encoded proteins, including at least some of the essential transmembrane subunits of the mitochondrial respiratory chain. The mitoribosomes are attached to the mitochondrial inner membrane and translation products are cotranslationally integrated into the membrane. This chain is Large ribosomal subunit protein uL13m (mrpl23), found in Neurospora crassa (strain ATCC 24698 / 74-OR23-1A / CBS 708.71 / DSM 1257 / FGSC 987).